A 281-amino-acid polypeptide reads, in one-letter code: Splicing regulator RBM11 (281 aa).

The region spanning 10-87 (RTVFVGNLEA…RPINVQYRFG (78 aa)) is the RRM domain. A disordered region spans residues 184–281 (PSSYKWTHQQ…FRKSKKKKRY (98 aa)). Polar residues-rich tracts occupy residues 187–217 (YKWTHQQPSDSDLYQMTAPLPNSASVSSSLN) and 229–242 (YKWTHQQPSDSDLY). Residues 245–280 (NKRKRQKQTSDSDSSTDNNRGNECSQKFRKSKKKKR) carry the Bipartite nuclear localization signal motif. Basic residues predominate over residues 271–281 (KFRKSKKKKRY).

Homodimer. Expressed in brain, hippocampus, prefrontal cortex, cerebellum, spinal cord, testis, mammary gland, spleen and kidney. Also expressed in fetal brain.

It localises to the nucleus. The protein resides in the nucleoplasm. Its subcellular location is the nucleus speckle. Tissue-specific splicing factor with potential implication in the regulation of alternative splicing during neuron and germ cell differentiation. Antagonizes SRSF1-mediated BCL-X splicing. May affect the choice of alternative 5' splice sites by binding to specific sequences in exons and antagonizing the SR protein SRSF1. The polypeptide is Splicing regulator RBM11 (Homo sapiens (Human)).